The chain runs to 174 residues: Gamma-crystallin C (174 aa).

Beta/gamma crystallin 'Greek key' domains lie at 2–40 (GKIT…RVDS) and 41–83 (GCWM…RLIP). S-methylcysteine is present on C23. The connecting peptide stretch occupies residues 84–87 (HTGS). 2 consecutive Beta/gamma crystallin 'Greek key' domains span residues 88–128 (HRMR…HVLE) and 129–171 (GCWV…RRVV).

It belongs to the beta/gamma-crystallin family.

Functionally, crystallins are the dominant structural components of the vertebrate eye lens. The sequence is that of Gamma-crystallin C (Crygc) from Rattus norvegicus (Rat).